A 215-amino-acid chain; its full sequence is Phosphatidylserine decarboxylase proenzyme (215 aa).

Ser-186 (schiff-base intermediate with substrate; via pyruvic acid) is an active-site residue. Ser-186 is subject to Pyruvic acid (Ser); by autocatalysis.

Belongs to the phosphatidylserine decarboxylase family. PSD-A subfamily. Heterodimer of a large membrane-associated beta subunit and a small pyruvoyl-containing alpha subunit. Pyruvate is required as a cofactor. Is synthesized initially as an inactive proenzyme. Formation of the active enzyme involves a self-maturation process in which the active site pyruvoyl group is generated from an internal serine residue via an autocatalytic post-translational modification. Two non-identical subunits are generated from the proenzyme in this reaction, and the pyruvate is formed at the N-terminus of the alpha chain, which is derived from the carboxyl end of the proenzyme. The post-translation cleavage follows an unusual pathway, termed non-hydrolytic serinolysis, in which the side chain hydroxyl group of the serine supplies its oxygen atom to form the C-terminus of the beta chain, while the remainder of the serine residue undergoes an oxidative deamination to produce ammonia and the pyruvoyl prosthetic group on the alpha chain.

The protein resides in the cell membrane. The catalysed reaction is a 1,2-diacyl-sn-glycero-3-phospho-L-serine + H(+) = a 1,2-diacyl-sn-glycero-3-phosphoethanolamine + CO2. It functions in the pathway phospholipid metabolism; phosphatidylethanolamine biosynthesis; phosphatidylethanolamine from CDP-diacylglycerol: step 2/2. Catalyzes the formation of phosphatidylethanolamine (PtdEtn) from phosphatidylserine (PtdSer). In Pelagibacter ubique (strain HTCC1062), this protein is Phosphatidylserine decarboxylase proenzyme.